A 23-amino-acid polypeptide reads, in one-letter code: Phospholipase A1 verutoxin-1 (23 aa).

Belongs to the AB hydrolase superfamily. Lipase family. In terms of processing, contains six disulfide bonds. As to expression, expressed by the venom gland.

It localises to the secreted. The enzyme catalyses a 1,2-diacyl-sn-glycero-3-phosphocholine + H2O = a 2-acyl-sn-glycero-3-phosphocholine + a fatty acid + H(+). It carries out the reaction 1-(9Z-octadecenoyl)-2-hexadecanoyl-sn-glycero-3-phosphocholine + H2O = 2-hexadecanoyl-sn-glycero-3-phosphocholine + (9Z)-octadecenoate + H(+). The catalysed reaction is a 1-acyl-sn-glycero-3-phosphocholine + H2O = sn-glycerol 3-phosphocholine + a fatty acid + H(+). It functions in the pathway phospholipid metabolism. Activity is maximal in the presence of calcium. However, unlike phospholipases A2 whose catalytic activity is strictly calcium-dependent, this enzyme shows considerable catalytic activity on phosphatidylcholine emulsified in calcium free solution; the catalytic activity of VT-1 assayed in the absence of calcium ions is 18-20% of that assayed in solution containing calcium ions. Functionally, catalyzes the hydrolysis of glycerophospholipids such as phosphatidylcholine (1,2-diacyl-sn-glycero-3-phosphocholine) and has a moderate activity to hydrolyze lysoglycerophospholipids such as lysophosphatidylcholine (1-acyl-sn-glycero-3-phosphocholine), but is unable to hydrolyze sphingomyelin. Liberates the fatty acid from the sn-1 position of 1,2-diacyl-sn-glycero-3-phosphocholine mainly, indicating phospholipase activity of the A1 type. In addition to acting as an allergen, it possesses a moderate hemolytic activity on red blood cells of mice (3% of hemolysis at 3.0 ug/ml). In Vespa velutina (Asian yellow-legged hornet), this protein is Phospholipase A1 verutoxin-1.